Reading from the N-terminus, the 211-residue chain is Thiamine-phosphate synthase (211 aa).

4-amino-2-methyl-5-(diphosphooxymethyl)pyrimidine contacts are provided by residues Gln-37 to Lys-41 and Asn-69. Positions 70 and 89 each coordinate Mg(2+). Ser-108 serves as a coordination point for 4-amino-2-methyl-5-(diphosphooxymethyl)pyrimidine. Thr-134–Thr-136 contacts 2-[(2R,5Z)-2-carboxy-4-methylthiazol-5(2H)-ylidene]ethyl phosphate. Position 137 (Lys-137) interacts with 4-amino-2-methyl-5-(diphosphooxymethyl)pyrimidine. 2-[(2R,5Z)-2-carboxy-4-methylthiazol-5(2H)-ylidene]ethyl phosphate is bound by residues Gly-166 and Val-186 to Ser-187.

The protein belongs to the thiamine-phosphate synthase family. Mg(2+) is required as a cofactor.

It catalyses the reaction 2-[(2R,5Z)-2-carboxy-4-methylthiazol-5(2H)-ylidene]ethyl phosphate + 4-amino-2-methyl-5-(diphosphooxymethyl)pyrimidine + 2 H(+) = thiamine phosphate + CO2 + diphosphate. The catalysed reaction is 2-(2-carboxy-4-methylthiazol-5-yl)ethyl phosphate + 4-amino-2-methyl-5-(diphosphooxymethyl)pyrimidine + 2 H(+) = thiamine phosphate + CO2 + diphosphate. It carries out the reaction 4-methyl-5-(2-phosphooxyethyl)-thiazole + 4-amino-2-methyl-5-(diphosphooxymethyl)pyrimidine + H(+) = thiamine phosphate + diphosphate. Its pathway is cofactor biosynthesis; thiamine diphosphate biosynthesis; thiamine phosphate from 4-amino-2-methyl-5-diphosphomethylpyrimidine and 4-methyl-5-(2-phosphoethyl)-thiazole: step 1/1. In terms of biological role, condenses 4-methyl-5-(beta-hydroxyethyl)thiazole monophosphate (THZ-P) and 2-methyl-4-amino-5-hydroxymethyl pyrimidine pyrophosphate (HMP-PP) to form thiamine monophosphate (TMP). In Shigella sonnei (strain Ss046), this protein is Thiamine-phosphate synthase.